We begin with the raw amino-acid sequence, 282 residues long: Pantothenate synthetase (282 aa).

30-37 is an ATP binding site; sequence MGYLHEGH. The Proton donor role is filled by H37. Q61 lines the (R)-pantoate pocket. Beta-alanine is bound at residue Q61. ATP is bound at residue 147 to 150; the sequence is GMKD. Q153 lines the (R)-pantoate pocket. ATP contacts are provided by residues V176 and 184–187; that span reads KSSR.

Belongs to the pantothenate synthetase family. As to quaternary structure, homodimer.

It localises to the cytoplasm. The catalysed reaction is (R)-pantoate + beta-alanine + ATP = (R)-pantothenate + AMP + diphosphate + H(+). The protein operates within cofactor biosynthesis; (R)-pantothenate biosynthesis; (R)-pantothenate from (R)-pantoate and beta-alanine: step 1/1. Its function is as follows. Catalyzes the condensation of pantoate with beta-alanine in an ATP-dependent reaction via a pantoyl-adenylate intermediate. This chain is Pantothenate synthetase, found in Bacillus thuringiensis subsp. konkukian (strain 97-27).